Reading from the N-terminus, the 330-residue chain is Free fatty acid receptor 2 (330 aa).

The Extracellular portion of the chain corresponds to 1–12 (MLPDWKSSLILM). The chain crosses the membrane as a helical span at residues 13 to 33 (AYIIIFLTGLPANLLALRAFV). Topologically, residues 34–41 (GRIRQPQP) are cytoplasmic. Residues 42-62 (APVHILLLSLTLADLLLLLLL) form a helical membrane-spanning segment. Topologically, residues 63–84 (PFKIIEAASNFRWYLPKVVCAL) are extracellular. The chain crosses the membrane as a helical span at residues 85-105 (TSFGFYSSIYCSTWLLAGISI). Topologically, residues 106–126 (ERYLGVAFPVQYKLSRRPLYG) are cytoplasmic. A helical membrane pass occupies residues 127–147 (VIAALVAWVMSFGHCTIVIIV). Residues 148–173 (QYLNTTEQVRSGNEITCYENFTDNQL) are Extracellular-facing. N-linked (GlcNAc...) asparagine glycans are attached at residues Asn-151 and Asn-167. A helical transmembrane segment spans residues 174–194 (DVVLPVRLELCLVLFFIPMAV). Residues 195-219 (TIFCYWRFVWIMLSQPLVGAQRRRR) lie on the Cytoplasmic side of the membrane. A helical transmembrane segment spans residues 220–240 (AVGLAVVTLLNFLVCFGPYNV). Residues 241–255 (SHLVGYHQRKSPWWR) are Extracellular-facing. The chain crosses the membrane as a helical span at residues 256 to 276 (SIAVVFSSLNASLDPLLFYFS). Residues 277-330 (SSVVRRAFGRGLQVLRNQGSSLLGRRGKDTAEGTNEDRGVGQGEGMPSSDFTTE) are Cytoplasmic-facing. A disordered region spans residues 299 to 330 (LGRRGKDTAEGTNEDRGVGQGEGMPSSDFTTE). Over residues 302-315 (RGKDTAEGTNEDRG) the composition is skewed to basic and acidic residues.

Belongs to the G-protein coupled receptor 1 family. Interacts with FCN1 (via Fibrinogen C-terminal domain). In terms of tissue distribution, expressed at relatively high levels in peripheral blood leukocytes and, to lesser extent, in spleen.

The protein localises to the cell membrane. In terms of biological role, g protein-coupled receptor that is activated by a major product of dietary fiber digestion, the short chain fatty acids (SCFAs), and that plays a role in the regulation of whole-body energy homeostasis and in intestinal immunity. In omnivorous mammals, the short chain fatty acids acetate, propionate and butyrate are produced primarily by the gut microbiome that metabolizes dietary fibers. SCFAs serve as a source of energy but also act as signaling molecules. That G protein-coupled receptor is probably coupled to the pertussis toxin-sensitive, G(i/o)-alpha family of G proteins but also to the Gq family. Its activation results in the formation of inositol 1,4,5-trisphosphate, the mobilization of intracellular calcium, the phosphorylation of the MAPK3/ERK1 and MAPK1/ERK2 kinases and the inhibition of intracellular cAMP accumulation. May play a role in glucose homeostasis by regulating the secretion of GLP-1, in response to short-chain fatty acids accumulating in the intestine. May also regulate the production of LEP/Leptin, a hormone acting on the central nervous system to inhibit food intake. Finally, may also regulate whole-body energy homeostasis through adipogenesis regulating both differentiation and lipid storage of adipocytes. In parallel to its role in energy homeostasis, may also mediate the activation of the inflammatory and immune responses by SCFA in the intestine, regulating the rapid production of chemokines and cytokines. May also play a role in the resolution of the inflammatory response and control chemotaxis in neutrophils. In addition to SCFAs, may also be activated by the extracellular lectin FCN1 in a process leading to activation of monocytes and inducing the secretion of interleukin-8/IL-8 in response to the presence of microbes. Among SCFAs, the fatty acids containing less than 6 carbons, the most potent activators are probably acetate, propionate and butyrate. Exhibits a SCFA-independent constitutive G protein-coupled receptor activity. This is Free fatty acid receptor 2 (FFAR2) from Homo sapiens (Human).